The chain runs to 395 residues: D-serine dehydratase (395 aa).

Lys-46 is modified (N6-(pyridoxal phosphate)lysine). Positions 184, 191, 232, 254, and 255 each coordinate pyridoxal 5'-phosphate. Zn(2+) contacts are provided by His-365 and Cys-367.

Belongs to the DSD1 family. Pyridoxal 5'-phosphate is required as a cofactor. Zn(2+) serves as cofactor.

The enzyme catalyses D-serine = pyruvate + NH4(+). In terms of biological role, catalyzes the conversion of D-serine to pyruvate and ammonia. Plays a role in D-serine detoxification. This Dictyostelium discoideum (Social amoeba) protein is D-serine dehydratase.